The primary structure comprises 670 residues: Probable plastid-lipid-associated protein 14, chloroplastic (670 aa).

The transit peptide at 1-52 directs the protein to the chloroplast; sequence MALCGVCSTPNLPNLQVFRSVRNSSIGYKRNHSLWQLRSSSFRAKSVIFHCS. Residues 88–399 form the Protein kinase domain; that stretch reads FRILDRVSIG…CLDALKHPFL (312 aa).

The protein belongs to the PAP/fibrillin family. Post-translationally, not autophosphorylated. In terms of tissue distribution, expressed in roots.

The protein localises to the plastid. Its subcellular location is the chloroplast. Functionally, directly regulated by DOF3.6/OBP3; unknown function. This Arabidopsis thaliana (Mouse-ear cress) protein is Probable plastid-lipid-associated protein 14, chloroplastic (PAP14).